The chain runs to 518 residues: ORC1-type DNA replication protein 7 (518 aa).

94–98 serves as a coordination point for ATP; that stretch reads TGKTA. Residues 165–196 form a disordered region; it reads DDDPNALEIGGSPGDDRTGNESSEGSDVSDSF. Residues 186–196 are compositionally biased toward low complexity; the sequence is SSEGSDVSDSF. Tyrosine 318 and arginine 330 together coordinate ATP.

It belongs to the CDC6/cdc18 family.

Functionally, involved in regulation of DNA replication. Required to initiate DNA replication of the circular chromosome at a nearby autonomously replicating sequence (ARS) oriC1. This chain is ORC1-type DNA replication protein 7 (orc7), found in Halobacterium salinarum (strain ATCC 700922 / JCM 11081 / NRC-1) (Halobacterium halobium).